The primary structure comprises 652 residues: Sodium-dependent nutrient amino acid transporter 1 (652 aa).

Residues 1–54 form a disordered region; that stretch reads MELKGVHQQNGTSNGTGAVGAEGESAPPTAPATAEAAASLETTTEKVDAEQQKP. Residues 1-58 lie on the Cytoplasmic side of the membrane; sequence MELKGVHQQNGTSNGTGAVGAEGESAPPTAPATAEAAASLETTTEKVDAEQQKPERTN. Residues 7-16 show a composition bias toward polar residues; the sequence is HQQNGTSNGT. The span at 21-42 shows a compositional bias: low complexity; sequence AEGESAPPTAPATAEAAASLET. Positions 43–54 are enriched in basic and acidic residues; that stretch reads TTEKVDAEQQKP. Transmembrane regions (helical) follow at residues 59-79, 92-112, 130-150, and 155-175; these read WGNG…LGNV, GAFL…MYYL, VVPG…CIIT, and LLAL…PWSY. N201 and N204 each carry an N-linked (GlcNAc...) asparagine glycan. A run of 9 helical transmembrane segments spans residues 240–260, 269–289, 318–338, 352–372, 412–432, 458–478, 485–505, 527–547, and 564–584; these read PDWK…LVIM, AAYF…VRAV, AVVQ…MFAS, IVTT…FAIL, LFSV…IVAL, ICGF…ILTL, TYVV…IYGM, CWSF…MVTI, and AGWL…MWYI.

It belongs to the sodium:neurotransmitter symporter (SNF) (TC 2.A.22) family.

The protein resides in the membrane. Its function is as follows. Unusual broad substrate spectrum amino acid:sodium cotransporter that promotes absorption of the D isomers of essential amino acids. Neutral amino acids are the preferred substrates, especially methionine and phenylalanine. In Drosophila persimilis (Fruit fly), this protein is Sodium-dependent nutrient amino acid transporter 1.